We begin with the raw amino-acid sequence, 607 residues long: MDTGGHGCSLSSLYVGDLHPDVTESMLYEMFSPIGNILSIRVCRDVATRRSLGYAYINFQQPADAERALDTMNFEVIKGQPIRIMWSHRDPGLRKSGMGNIFIKNLENSIDNKALYDTFSTFGSILSSKVVYNEHGSRGFGFVHFETHEAAQKAINTMNGMLLNDRKVFVGHFKSRQKREAELGARALGFTNIYVKNLHANVDEQRLQDLFSQFGNMQSVKVMRDSNGQSRGFGFVNFEKHEEAQKAVDHMNGKEVSGQLLYVGRAQKRAERQSELKRRFEQMKQERQNRYQGVNLYVKNLDDSINDERLKEVFSTYGVITSAKVMTESSHSKGFGFVCFSSPEEATKAVTEMNGRIVGTKPLYVALAQRKEERKAILTNQYRRRPSHPVLSSFQQPTSYLLPAVPQSTAQAVYYSSGSITPMQPDPRWTAQPHGPPSTCPPAASVVQPLSTTQHPCIHLRGASQVSSQVPHTQRVVNIGTQTTGPGGEGSSIPGQLLVPHRGTSAVHSAHGVQESAVYVPGHQPLTVSMLAAAPLHEQKQMIGERLYSLIHDACAPLTGKITGMLLELDNLELLLLLESPESLHAKIEEAVAVLQVHREMESTDRN.

RRM domains lie at 11 to 89, 99 to 175, 191 to 268, and 294 to 370; these read SSLY…WSHR, GNIF…HFKS, TNIY…RAQK, and VNLY…LAQR. One can recognise a PABC domain in the interval 523–600; that stretch reads HQPLTVSMLA…AVAVLQVHRE (78 aa).

This sequence belongs to the polyadenylate-binding protein type-1 family. In terms of tissue distribution, expressed in ovary and testis.

Its subcellular location is the cytoplasm. Poly(A)-binding protein involved in oocyte maturation and early embryo development. It is required for cytosolic mRNA polyadenylation and translational activation of maternally stored mRNA in oocytes. This Mus musculus (Mouse) protein is Polyadenylate-binding protein 1-like.